The sequence spans 395 residues: Fractalkine (395 aa).

The N-terminal stretch at 1–24 is a signal peptide; the sequence is MAPSPLAWLLRLAAFFHLCTLLPG. The segment at 25-100 is chemokine and involved in interaction with ITGAV:ITGB3 and ITGA4:ITGB1; the sequence is QHLGMTKCEI…HQAAALTKNG (76 aa). The Extracellular segment spans residues 25–336; that stretch reads QHLGMTKCEI…TPVPDTQAAT (312 aa). Cystine bridges form between Cys32-Cys58 and Cys36-Cys74. The interval 101–336 is mucin-like stalk; sequence GKFEKRVDNV…TPVPDTQAAT (236 aa). 2 stretches are compositionally biased toward polar residues: residues 148-172 and 201-210; these read ARGT…TSEA and AVYQSGSSSW. Disordered regions lie at residues 148–180 and 201–305; these read ARGT…LTAK and AVYQ…SGSQ. The span at 218–236 shows a compositional bias: low complexity; it reads SPSTTAPSPQVSTTSPSTP. The chain crosses the membrane as a helical span at residues 337 to 357; sequence RRQAVGLLAFLGLLFCLGVAM. The Cytoplasmic portion of the chain corresponds to 358-395; it reads FAYQSLQGCPRKMAGEMVEGLRYVPRSCGSNSYVLVPV.

It belongs to the intercrine delta family. Monomer. Forms a ternary complex with CX3CR1 and ITGAV:ITGB3 or ITGA4:ITGB1. In terms of processing, a soluble short 80 kDa form may be released by proteolytic cleavage from the long membrane-anchored form. As to expression, highest levels in brain. Lower levels in kidney, heart and lung. Also found in skeletal muscle and testis. Highly expressed in lesional smooth muscle cells, but not macrophages. Low levels of ABCD-3 mRNA were also found in anti-CD40-stimulated splenic B-cells, but not in resting B-cells. Also expressed in dendritic cells.

It localises to the cell membrane. The protein localises to the secreted. Functionally, chemokine that acts as a ligand for both CX3CR1 and integrins ITGAV:ITGB3 and ITGA4:ITGB1. The CX3CR1-CX3CL1 signaling exerts distinct functions in different tissue compartments, such as immune response, inflammation, cell adhesion and chemotaxis. Regulates leukocyte adhesion and migration processes at the endothelium. Can activate integrins in both a CX3CR1-dependent and CX3CR1-independent manner. In the presence of CX3CR1, activates integrins by binding to the classical ligand-binding site (site 1) in integrins. In the absence of CX3CR1, binds to a second site (site 2) in integrins which is distinct from site 1 and enhances the binding of other integrin ligands to site 1. Its function is as follows. The soluble form is chemotactic for T-cells and monocytes, but not for neutrophils. The membrane-bound form promotes adhesion of those leukocytes to endothelial cells. This Mus musculus (Mouse) protein is Fractalkine.